We begin with the raw amino-acid sequence, 313 residues long: Porphobilinogen deaminase (313 aa).

The residue at position 242 (Cys242) is an S-(dipyrrolylmethanemethyl)cysteine.

It belongs to the HMBS family. As to quaternary structure, monomer. The cofactor is dipyrromethane.

It carries out the reaction 4 porphobilinogen + H2O = hydroxymethylbilane + 4 NH4(+). Its pathway is porphyrin-containing compound metabolism; protoporphyrin-IX biosynthesis; coproporphyrinogen-III from 5-aminolevulinate: step 2/4. In terms of biological role, tetrapolymerization of the monopyrrole PBG into the hydroxymethylbilane pre-uroporphyrinogen in several discrete steps. In Pseudomonas fluorescens (strain Pf0-1), this protein is Porphobilinogen deaminase.